A 418-amino-acid chain; its full sequence is Gamma-glutamyl phosphate reductase (418 aa).

This sequence belongs to the gamma-glutamyl phosphate reductase family.

It localises to the cytoplasm. It carries out the reaction L-glutamate 5-semialdehyde + phosphate + NADP(+) = L-glutamyl 5-phosphate + NADPH + H(+). The protein operates within amino-acid biosynthesis; L-proline biosynthesis; L-glutamate 5-semialdehyde from L-glutamate: step 2/2. In terms of biological role, catalyzes the NADPH-dependent reduction of L-glutamate 5-phosphate into L-glutamate 5-semialdehyde and phosphate. The product spontaneously undergoes cyclization to form 1-pyrroline-5-carboxylate. The polypeptide is Gamma-glutamyl phosphate reductase (Nitrosococcus oceani (strain ATCC 19707 / BCRC 17464 / JCM 30415 / NCIMB 11848 / C-107)).